The sequence spans 371 residues: MSGNTFGKLFTVTTFGESHGLALGAIIDGCPPGIELSEEDLQLDLDRRKPGTSRYTTQRKEADQVKILSGVFEGKTTGTPIGLLIENTDQRSKDYGKIKDQFRPAHADYTYMQKYGIRDYRGGGRSSARETAMRVAAGAVAKKVLANLWGIKIRGYLSQLGPIKAELLDWNEVEQNPFFCPDKSKVPEMEAYMQALNKEGNSVGAKITVVAENMIPGLGEPVFDRIDADLAHALMGINAVKGVEIGAGFACVAQKGTEHRDEITPEGFKSNQAGGVLGGISTGQDLIASLALKPTSSLRIPGQSVDIEGNPVEVITTGRHDPCVGIRATPIAEAMMALVILDHALRNRGQNGHVQSGVPIIPGSIPGQIGS.

Residues Arg48 and Arg54 each coordinate NADP(+). FMN is bound by residues 125–127 (RSS), 238–239 (NA), Gly278, 293–297 (KPTSS), and Arg319.

It belongs to the chorismate synthase family. As to quaternary structure, homotetramer. FMNH2 serves as cofactor.

The enzyme catalyses 5-O-(1-carboxyvinyl)-3-phosphoshikimate = chorismate + phosphate. It functions in the pathway metabolic intermediate biosynthesis; chorismate biosynthesis; chorismate from D-erythrose 4-phosphate and phosphoenolpyruvate: step 7/7. In terms of biological role, catalyzes the anti-1,4-elimination of the C-3 phosphate and the C-6 proR hydrogen from 5-enolpyruvylshikimate-3-phosphate (EPSP) to yield chorismate, which is the branch point compound that serves as the starting substrate for the three terminal pathways of aromatic amino acid biosynthesis. This reaction introduces a second double bond into the aromatic ring system. This is Chorismate synthase from Saccharophagus degradans (strain 2-40 / ATCC 43961 / DSM 17024).